The chain runs to 879 residues: Alanine--tRNA ligase (879 aa).

The Zn(2+) site is built by histidine 566, histidine 570, cysteine 668, and histidine 672.

This sequence belongs to the class-II aminoacyl-tRNA synthetase family. The cofactor is Zn(2+).

The protein resides in the cytoplasm. It carries out the reaction tRNA(Ala) + L-alanine + ATP = L-alanyl-tRNA(Ala) + AMP + diphosphate. Functionally, catalyzes the attachment of alanine to tRNA(Ala) in a two-step reaction: alanine is first activated by ATP to form Ala-AMP and then transferred to the acceptor end of tRNA(Ala). Also edits incorrectly charged Ser-tRNA(Ala) and Gly-tRNA(Ala) via its editing domain. This Listeria innocua serovar 6a (strain ATCC BAA-680 / CLIP 11262) protein is Alanine--tRNA ligase.